A 446-amino-acid polypeptide reads, in one-letter code: Rhoptry surface protein CERLI1 (446 aa).

The region spanning 39-208 (KPIGQLYRLM…NQTKNNEKIE (170 aa)) is the C2 domain. The PH domain maps to 252-363 (GYLLHSNFYI…ILVSNYKRER (112 aa)).

Its subcellular location is the cytoplasmic vesicle. It localises to the secretory vesicle. The protein resides in the rhoptry membrane. Essential for merozoite invasion of host cells by controlling rhoptry secretion. Binds to phosphatidic acid (PA) and phosphatidylinositol 4,5-bisphosphate (PIP2) lipids and thus, likely contributes to the assembly of the machinery that docks or primes the rhoptry to the parasite cell membrane prior to the fusion with the host cell membrane. In Plasmodium falciparum (isolate 3D7), this protein is Rhoptry surface protein CERLI1.